The primary structure comprises 20 residues: Fibrinogen beta chain (20 aa).

The span at 1–12 (IIDYYDEGEEDR) shows a compositional bias: acidic residues. The segment at 1–20 (IIDYYDEGEEDRDVGVVDAR) is disordered.

As to quaternary structure, heterohexamer; disulfide linked. Contains 2 sets of 3 non-identical chains (alpha, beta and gamma). The 2 heterotrimers are in head to head conformation with the N-termini in a small central domain. In terms of processing, conversion of fibrinogen to fibrin is triggered by thrombin, which cleaves fibrinopeptides A and B from alpha and beta chains, and thus exposes the N-terminal polymerization sites responsible for the formation of the soft clot.

It localises to the secreted. Functionally, cleaved by the protease thrombin to yield monomers which, together with fibrinogen alpha (FGA) and fibrinogen gamma (FGG), polymerize to form an insoluble fibrin matrix. Fibrin has a major function in hemostasis as one of the primary components of blood clots. In addition, functions during the early stages of wound repair to stabilize the lesion and guide cell migration during re-epithelialization. Was originally thought to be essential for platelet aggregation, based on in vitro studies using anticoagulated blood. However subsequent studies have shown that it is not absolutely required for thrombus formation in vivo. Enhances expression of SELP in activated platelets. Maternal fibrinogen is essential for successful pregnancy. Fibrin deposition is also associated with infection, where it protects against IFNG-mediated hemorrhage. May also facilitate the antibacterial immune response via both innate and T-cell mediated pathways. In Felis catus (Cat), this protein is Fibrinogen beta chain (FGB).